The chain runs to 334 residues: Deoxyhypusine synthase (334 aa).

NAD(+)-binding positions include 73 to 77, 99 to 101, Glu-105, and Asp-207; these read SNIIS and TGG. 104–105 contacts spermidine; it reads EE. Residues Asp-212 and His-256 each contribute to the spermidine site. 276 to 277 is a binding site for NAD(+); that stretch reads NA. Spermidine-binding positions include 282 to 284 and 291 to 297; these read GSD and EAVSWGK. Lys-297 acts as the Nucleophile in catalysis. NAD(+) is bound at residue 310 to 311; it reads DA.

Belongs to the deoxyhypusine synthase family. It depends on NAD(+) as a cofactor.

It catalyses the reaction [eIF5A protein]-L-lysine + spermidine = [eIF5A protein]-deoxyhypusine + propane-1,3-diamine. Its pathway is protein modification; eIF5A hypusination. Functionally, catalyzes the NAD-dependent oxidative cleavage of spermidine and the subsequent transfer of the butylamine moiety of spermidine to the epsilon-amino group of a specific lysine residue of the eIF-5A precursor protein to form the intermediate deoxyhypusine residue. In Encephalitozoon cuniculi (strain GB-M1) (Microsporidian parasite), this protein is Deoxyhypusine synthase (DYS1).